Reading from the N-terminus, the 93-residue chain is Integration host factor subunit beta (93 aa).

The protein belongs to the bacterial histone-like protein family. In terms of assembly, heterodimer of an alpha and a beta chain.

Functionally, this protein is one of the two subunits of integration host factor, a specific DNA-binding protein that functions in genetic recombination as well as in transcriptional and translational control. In Idiomarina loihiensis (strain ATCC BAA-735 / DSM 15497 / L2-TR), this protein is Integration host factor subunit beta.